Here is a 208-residue protein sequence, read N- to C-terminus: Na(+)-translocating NADH-quinone reductase subunit D (208 aa).

The next 5 helical transmembrane spans lie at 42–62 (IVMG…ISLV), 72–92 (IIVQ…LLQA), 103–123 (VFVG…AFAM), 131–151 (LIDG…VATV), and 178–198 (NGLF…IWGL).

This sequence belongs to the NqrDE/RnfAE family. In terms of assembly, composed of six subunits; NqrA, NqrB, NqrC, NqrD, NqrE and NqrF.

Its subcellular location is the cell inner membrane. The catalysed reaction is a ubiquinone + n Na(+)(in) + NADH + H(+) = a ubiquinol + n Na(+)(out) + NAD(+). NQR complex catalyzes the reduction of ubiquinone-1 to ubiquinol by two successive reactions, coupled with the transport of Na(+) ions from the cytoplasm to the periplasm. NqrA to NqrE are probably involved in the second step, the conversion of ubisemiquinone to ubiquinol. This Neisseria gonorrhoeae (strain ATCC 700825 / FA 1090) protein is Na(+)-translocating NADH-quinone reductase subunit D.